The following is a 157-amino-acid chain: Cytochrome c-type biogenesis protein CcmE (157 aa).

Topologically, residues 1 to 7 are cytoplasmic; the sequence is MTPRQRR. Residues 8–28 form a helical; Signal-anchor for type II membrane protein membrane-spanning segment; that stretch reads LGLLAAALACCGVAAALVLNA. Topologically, residues 29-157 are periplasmic; sequence FRANLVFFFS…GAMAAQELRR (129 aa). The heme site is built by histidine 123 and tyrosine 127.

Belongs to the CcmE/CycJ family.

Its subcellular location is the cell inner membrane. In terms of biological role, heme chaperone required for the biogenesis of c-type cytochromes. Transiently binds heme delivered by CcmC and transfers the heme to apo-cytochromes in a process facilitated by CcmF and CcmH. In Cupriavidus taiwanensis (strain DSM 17343 / BCRC 17206 / CCUG 44338 / CIP 107171 / LMG 19424 / R1) (Ralstonia taiwanensis (strain LMG 19424)), this protein is Cytochrome c-type biogenesis protein CcmE.